A 92-amino-acid chain; its full sequence is Small ribosomal subunit protein bS18 (92 aa).

A disordered region spans residues 1-22 (MADERAPQRSTSGPRKKRPFQR).

This sequence belongs to the bacterial ribosomal protein bS18 family. In terms of assembly, part of the 30S ribosomal subunit. Forms a tight heterodimer with protein bS6.

Its function is as follows. Binds as a heterodimer with protein bS6 to the central domain of the 16S rRNA, where it helps stabilize the platform of the 30S subunit. In Citrifermentans bemidjiense (strain ATCC BAA-1014 / DSM 16622 / JCM 12645 / Bem) (Geobacter bemidjiensis), this protein is Small ribosomal subunit protein bS18.